The primary structure comprises 446 residues: Chromosomal replication initiator protein DnaA (446 aa).

The interval 1-92 is domain I, interacts with DnaA modulators; sequence MENISDLWNS…SQAEEEIDLP (92 aa). The domain II stretch occupies residues 93-109; that stretch reads PAKPNAAQDDSNHLPQS. The tract at residues 110–326 is domain III, AAA+ region; sequence MLNPKYTFDT…GALIRVVAYS (217 aa). Residues G154, G156, K157, and T158 each contribute to the ATP site. The tract at residues 327–446 is domain IV, binds dsDNA; it reads SLINKDINAD…QVEEINDILK (120 aa).

The protein belongs to the DnaA family. As to quaternary structure, oligomerizes as a right-handed, spiral filament on DNA at oriC.

Its subcellular location is the cytoplasm. Plays an essential role in the initiation and regulation of chromosomal replication. ATP-DnaA binds to the origin of replication (oriC) to initiate formation of the DNA replication initiation complex once per cell cycle. Binds the DnaA box (a 9 base pair repeat at the origin) and separates the double-stranded (ds)DNA. Forms a right-handed helical filament on oriC DNA; dsDNA binds to the exterior of the filament while single-stranded (ss)DNA is stabiized in the filament's interior. The ATP-DnaA-oriC complex binds and stabilizes one strand of the AT-rich DNA unwinding element (DUE), permitting loading of DNA polymerase. After initiation quickly degrades to an ADP-DnaA complex that is not apt for DNA replication. Binds acidic phospholipids. In Bacillus anthracis (strain A0248), this protein is Chromosomal replication initiator protein DnaA.